A 219-amino-acid chain; its full sequence is Cytidylate kinase (219 aa).

21-29 (GPAASGKGT) contributes to the ATP binding site.

The protein belongs to the cytidylate kinase family. Type 1 subfamily.

The protein resides in the cytoplasm. The catalysed reaction is CMP + ATP = CDP + ADP. It carries out the reaction dCMP + ATP = dCDP + ADP. The protein is Cytidylate kinase of Rickettsia conorii (strain ATCC VR-613 / Malish 7).